Reading from the N-terminus, the 491-residue chain is Acetyl-coenzyme A carboxylase carboxyl transferase subunit beta, chloroplastic (491 aa).

A disordered region spans residues 28 to 56 (LGPIENTSESEDPNRNDMKKNSHSWGSRD). The region spanning 223–491 (LWVQCENCYG…FPLNKNSIEH (269 aa)) is the CoA carboxyltransferase N-terminal domain. Cysteine 227, cysteine 230, cysteine 246, and cysteine 249 together coordinate Zn(2+). The C4-type zinc-finger motif lies at 227–249 (CENCYGLNYKKILKSKMNLCEQC).

The protein belongs to the AccD/PCCB family. In terms of assembly, acetyl-CoA carboxylase is a heterohexamer composed of biotin carboxyl carrier protein, biotin carboxylase and 2 subunits each of ACCase subunit alpha and ACCase plastid-coded subunit beta (accD). Zn(2+) is required as a cofactor.

Its subcellular location is the plastid. It is found in the chloroplast stroma. The catalysed reaction is N(6)-carboxybiotinyl-L-lysyl-[protein] + acetyl-CoA = N(6)-biotinyl-L-lysyl-[protein] + malonyl-CoA. It functions in the pathway lipid metabolism; malonyl-CoA biosynthesis; malonyl-CoA from acetyl-CoA: step 1/1. Its function is as follows. Component of the acetyl coenzyme A carboxylase (ACC) complex. Biotin carboxylase (BC) catalyzes the carboxylation of biotin on its carrier protein (BCCP) and then the CO(2) group is transferred by the transcarboxylase to acetyl-CoA to form malonyl-CoA. The chain is Acetyl-coenzyme A carboxylase carboxyl transferase subunit beta, chloroplastic from Daucus carota (Wild carrot).